Reading from the N-terminus, the 430-residue chain is Glutamate-1-semialdehyde 2,1-aminomutase 2 (430 aa).

Residue lysine 268 is modified to N6-(pyridoxal phosphate)lysine.

The protein belongs to the class-III pyridoxal-phosphate-dependent aminotransferase family. HemL subfamily. In terms of assembly, homodimer. It depends on pyridoxal 5'-phosphate as a cofactor.

Its subcellular location is the cytoplasm. It catalyses the reaction (S)-4-amino-5-oxopentanoate = 5-aminolevulinate. The protein operates within porphyrin-containing compound metabolism; protoporphyrin-IX biosynthesis; 5-aminolevulinate from L-glutamyl-tRNA(Glu): step 2/2. This chain is Glutamate-1-semialdehyde 2,1-aminomutase 2, found in Shouchella clausii (strain KSM-K16) (Alkalihalobacillus clausii).